Reading from the N-terminus, the 388-residue chain is Succinate--CoA ligase [ADP-forming] subunit beta (388 aa).

In terms of domain architecture, ATP-grasp spans 9–244 (KKLFAEYGLP…PSQDDPREAH (236 aa)). Residues lysine 46, 53 to 55 (GRG), glutamate 99, threonine 102, and glutamate 107 contribute to the ATP site. Mg(2+)-binding residues include asparagine 199 and aspartate 213. Residues asparagine 264 and 321–323 (GIV) each bind substrate.

This sequence belongs to the succinate/malate CoA ligase beta subunit family. In terms of assembly, heterotetramer of two alpha and two beta subunits. Mg(2+) is required as a cofactor.

The catalysed reaction is succinate + ATP + CoA = succinyl-CoA + ADP + phosphate. It catalyses the reaction GTP + succinate + CoA = succinyl-CoA + GDP + phosphate. Its pathway is carbohydrate metabolism; tricarboxylic acid cycle; succinate from succinyl-CoA (ligase route): step 1/1. Succinyl-CoA synthetase functions in the citric acid cycle (TCA), coupling the hydrolysis of succinyl-CoA to the synthesis of either ATP or GTP and thus represents the only step of substrate-level phosphorylation in the TCA. The beta subunit provides nucleotide specificity of the enzyme and binds the substrate succinate, while the binding sites for coenzyme A and phosphate are found in the alpha subunit. The protein is Succinate--CoA ligase [ADP-forming] subunit beta of Aeromonas salmonicida (strain A449).